Here is a 159-residue protein sequence, read N- to C-terminus: Ribonuclease H (159 aa).

The 143-residue stretch at 8–150 folds into the RNase H type-1 domain; sequence NLKEITMYTD…CDQLAVAAAK (143 aa). Mg(2+)-binding residues include aspartate 17, glutamate 55, aspartate 77, and aspartate 142.

The protein belongs to the RNase H family. Monomer. Mg(2+) is required as a cofactor.

It is found in the cytoplasm. It catalyses the reaction Endonucleolytic cleavage to 5'-phosphomonoester.. Functionally, endonuclease that specifically degrades the RNA of RNA-DNA hybrids. This chain is Ribonuclease H, found in Desulforamulus reducens (strain ATCC BAA-1160 / DSM 100696 / MI-1) (Desulfotomaculum reducens).